Reading from the N-terminus, the 263-residue chain is Phosphonates import ATP-binding protein PhnC 1 (263 aa).

In terms of domain architecture, ABC transporter spans 3 to 248; the sequence is IQVENLWVAF…KEKELYFGEK (246 aa). Residue 37 to 44 participates in ATP binding; it reads GPSGAGKS.

This sequence belongs to the ABC transporter superfamily. Phosphonates importer (TC 3.A.1.9.1) family. In terms of assembly, the complex is composed of two ATP-binding proteins (PhnC), two transmembrane proteins (PhnE) and a solute-binding protein (PhnD).

The protein localises to the cell inner membrane. The catalysed reaction is phosphonate(out) + ATP + H2O = phosphonate(in) + ADP + phosphate + H(+). In terms of biological role, part of the ABC transporter complex PhnCDE involved in phosphonates import. Responsible for energy coupling to the transport system. The protein is Phosphonates import ATP-binding protein PhnC 1 of Synechococcus sp. (strain JA-2-3B'a(2-13)) (Cyanobacteria bacterium Yellowstone B-Prime).